The sequence spans 143 residues: Glutamyl-tRNA(Gln) amidotransferase subunit C, chloroplastic/mitochondrial (143 aa).

It belongs to the GatC family. In terms of assembly, subunit of the heterotrimeric GatCAB amidotransferase (AdT) complex, composed of A, B and C subunits.

It is found in the mitochondrion. The protein resides in the plastid. Its subcellular location is the chloroplast. It catalyses the reaction L-glutamyl-tRNA(Gln) + L-glutamine + ATP + H2O = L-glutaminyl-tRNA(Gln) + L-glutamate + ADP + phosphate + H(+). Its function is as follows. Allows the formation of correctly charged Gln-tRNA(Gln) through the transamidation of misacylated Glu-tRNA(Gln) in chloroplasts and mitochondria. The reaction takes place in the presence of glutamine and ATP through an activated gamma-phospho-Glu-tRNA(Gln). This Ricinus communis (Castor bean) protein is Glutamyl-tRNA(Gln) amidotransferase subunit C, chloroplastic/mitochondrial.